The following is a 338-amino-acid chain: Large ribosomal subunit protein uL10 (338 aa).

Residues 298–338 form a disordered region; it reads TVQQSQSQQPAAEEKKEEKKEEEKKGPSEEEIASGLASLFG. Over residues 309–325 the composition is skewed to basic and acidic residues; sequence AEEKKEEKKEEEKKGPS.

Belongs to the universal ribosomal protein uL10 family. As to quaternary structure, part of the 50S ribosomal subunit. Forms part of the ribosomal stalk which helps the ribosome interact with GTP-bound translation factors. Forms a heptameric L10(L12)2(L12)2(L12)2 complex, where L10 forms an elongated spine to which the L12 dimers bind in a sequential fashion.

Functionally, forms part of the ribosomal stalk, playing a central role in the interaction of the ribosome with GTP-bound translation factors. The sequence is that of Large ribosomal subunit protein uL10 from Saccharolobus solfataricus (strain ATCC 35092 / DSM 1617 / JCM 11322 / P2) (Sulfolobus solfataricus).